The primary structure comprises 86 residues: Large ribosomal subunit protein uL23 (86 aa).

Belongs to the universal ribosomal protein uL23 family. In terms of assembly, part of the 50S ribosomal subunit. Contacts protein L29.

In terms of biological role, binds to 23S rRNA. One of the proteins that surrounds the polypeptide exit tunnel on the outside of the ribosome. This Methanosphaera stadtmanae (strain ATCC 43021 / DSM 3091 / JCM 11832 / MCB-3) protein is Large ribosomal subunit protein uL23.